Reading from the N-terminus, the 250-residue chain is Probable aquaporin TIP-type RB7-18C (250 aa).

The next 2 membrane-spanning stretches (helical) occupy residues 20 to 42 (AYVA…AIAY) and 55 to 77 (GLVA…AANI). The NPA 1 motif lies at 83–85 (NPA). The next 3 helical transmembrane spans lie at 97-119 (TILT…CLLL), 140-162 (FQGV…ATAA), and 172-194 (IAPI…FSGG). The short motif at 197 to 199 (NPA) is the NPA 2 element. A helical transmembrane segment spans residues 215–237 (WIYWAGPLIGGGLAGFIYGDVFI).

This sequence belongs to the MIP/aquaporin (TC 1.A.8) family. TIP (TC 1.A.8.10) subfamily. Roots.

The protein localises to the vacuole membrane. In terms of biological role, channel protein in tonoplast. These proteins may allow the diffusion of amino acids and/or peptides from the vacuolar compartment to the cytoplasm. This Nicotiana tabacum (Common tobacco) protein is Probable aquaporin TIP-type RB7-18C.